A 134-amino-acid chain; its full sequence is MKILSVFLFVFSIYIFGHVSGTGIRIVNELKSHKNLWMRCYSKNDVIGPKIIPVGYDYVNSFRANIWGTTRFMCTLKQRPNYRHYQNFTAFKQYTAYDNGADWDWRAREDGIYLKKEGGLKKSVDMNKVYDWIN.

A signal peptide spans 1 to 21; sequence MKILSVFLFVFSIYIFGHVSG. Asn87 carries an N-linked (GlcNAc...) asparagine glycan.

This sequence belongs to the plant self-incompatibility (S1) protein family.

The protein localises to the secreted. This is S-protein homolog 31 from Arabidopsis thaliana (Mouse-ear cress).